A 511-amino-acid chain; its full sequence is Vesicular acetylcholine transporter (511 aa).

Residues 1 to 36 (MVVGQAKAAMGKISSAIGERSKRISGAMNEPLRKRK) lie on the Cytoplasmic side of the membrane. The helical transmembrane segment at 37-57 (ILLVIVCIAMLLDNMLYMVIV) threads the bilayer. Topologically, residues 58–108 (PIVPNYLETIRTYKLVYITIPSNGTNGSLLNSTQRAVLERNPNANEDIQIG) are lumenal, vesicle. 3 N-linked (GlcNAc...) asparagine glycosylation sites follow: Asn80, Asn83, and Asn88. Residues 109 to 129 (VLFASKAILQLLSNPFTGTFI) traverse the membrane as a helical segment. Residues 130–135 (DRVGYD) are Cytoplasmic-facing. The helical transmembrane segment at 136-156 (IPLLIGLTIMFFSTITFAFGE) threads the bilayer. The Lumenal, vesicle segment spans residues 157–165 (SYAILFAAR). The chain crosses the membrane as a helical span at residues 166–186 (SLQGLGSAFADTSGIAMIADK). Residues 187–197 (YTEESERTQAL) are Cytoplasmic-facing. A helical transmembrane segment spans residues 198–218 (GIALAFISFGSLVAPPFGGVL). Topologically, residues 219 to 225 (YQFAGKW) are lumenal, vesicle. A helical membrane pass occupies residues 226 to 246 (VPFLVLSFVCLLDGILLLMVV). Topologically, residues 247 to 267 (TPFASRTRGNTLQGTPIHKLM) are cytoplasmic. Residues 268–288 (IDPYIAVVAGALTTCNIPLAF) form a helical membrane-spanning segment. The Lumenal, vesicle portion of the chain corresponds to 289–306 (LEPTISNWMKKTMNASEW). N-linked (GlcNAc...) asparagine glycosylation is present at Asn302. Residues 307–327 (QMGITWLPAFFPHILGVYITV) form a helical membrane-spanning segment. At 328-337 (KLAAKYPNYQ) the chain is on the cytoplasmic side. Residues 338–358 (WLYGAFGLVIIGVSSCTIPAC) traverse the membrane as a helical segment. Over 359–363 (RNFEE) the chain is Lumenal, vesicle. A helical transmembrane segment spans residues 364–384 (LIIPLCALCFGIALVDTALLP). Residues 385–400 (TLAFLVDIRYVSVYGS) lie on the Cytoplasmic side of the membrane. The helical transmembrane segment at 401 to 421 (VYAIADISYSVAYALGPIMAG) threads the bilayer. Topologically, residues 422–428 (QIVHDLG) are lumenal, vesicle. Residues 429–449 (FVQLNLGMGLVNILYAPALLF) traverse the membrane as a helical segment. The Cytoplasmic portion of the chain corresponds to 450–511 (LRNVCQMKPS…VLSDQEGYSE (62 aa)). The segment at 486 to 511 (AKEPHGTSSGNHSVHAVLSDQEGYSE) is disordered.

The protein belongs to the major facilitator superfamily. Vesicular transporter family. High expression in the electric lobe of the brain.

The protein localises to the membrane. Its function is as follows. Involved in acetylcholine transport into synaptic vesicles. In Torpedo torpedo (Common torpedo), this protein is Vesicular acetylcholine transporter.